The chain runs to 471 residues: MTDLPDSTRWQLWIVAFGFFMQSLDTTIVNTALPSMAQSLGESPLHMHMVIVSYVLTVAVMLPASGWLADKVGVRNIFFTAIVLFTLGSLFCALSGTLNELLLARALQGVGGAMMVPVGRLTVMKIVPREQYMAAMTFVTLPGQVGPLLGPALGGLLVEYASWHWIFLINIPVGIIGAIATLMLMPNYTMQTRRFDLSGFLLLAVGMAVLTLALDGSKGTGLSPLAITGLVAVGVVALVLYLLHARNNHRALFSLKLFRTRTFSLGLAGSFAGRIGSGMLPFMTPVFLQIGLGFSPFHAGLMMIPMVLGSMGMKRIVVQVVNRFGYRRVLVATTLGLSLVTLLFMTTALLGWYYVLPFVLFLQGMVNSTRFSSMNTLTLKDLPDNLASSGNSLLSMIMQLSMSIGVTIAGLLLGLFGSQHVSVDSGTTQTVFMYTWLSMAFIIALPAFIFARVPNDTHQNVAISRRKRSAQ.

The Periplasmic segment spans residues 1–11; it reads MTDLPDSTRWQ. The chain crosses the membrane as a helical span at residues 12–32; sequence LWIVAFGFFMQSLDTTIVNTA. Residues 33-48 lie on the Cytoplasmic side of the membrane; that stretch reads LPSMAQSLGESPLHMH. A helical membrane pass occupies residues 49–69; the sequence is MVIVSYVLTVAVMLPASGWLA. Over 70 to 76 the chain is Periplasmic; the sequence is DKVGVRN. A helical membrane pass occupies residues 77-97; that stretch reads IFFTAIVLFTLGSLFCALSGT. The Cytoplasmic portion of the chain corresponds to 98–101; sequence LNEL. The chain crosses the membrane as a helical span at residues 102–124; the sequence is LLARALQGVGGAMMVPVGRLTVM. The Periplasmic portion of the chain corresponds to 125–137; sequence KIVPREQYMAAMT. The helical transmembrane segment at 138–158 threads the bilayer; sequence FVTLPGQVGPLLGPALGGLLV. Topologically, residues 159 to 164 are cytoplasmic; the sequence is EYASWH. The chain crosses the membrane as a helical span at residues 165–185; that stretch reads WIFLINIPVGIIGAIATLMLM. Over 186–196 the chain is Periplasmic; it reads PNYTMQTRRFD. Residues 197-217 traverse the membrane as a helical segment; that stretch reads LSGFLLLAVGMAVLTLALDGS. Over 218–224 the chain is Cytoplasmic; it reads KGTGLSP. A helical transmembrane segment spans residues 225-245; it reads LAITGLVAVGVVALVLYLLHA. The Periplasmic segment spans residues 246 to 262; sequence RNNHRALFSLKLFRTRT. A helical membrane pass occupies residues 263–283; it reads FSLGLAGSFAGRIGSGMLPFM. At 284–285 the chain is on the cytoplasmic side; it reads TP. A helical membrane pass occupies residues 286–306; that stretch reads VFLQIGLGFSPFHAGLMMIPM. Residues 307–341 lie on the Periplasmic side of the membrane; sequence VLGSMGMKRIVVQVVNRFGYRRVLVATTLGLSLVT. The helical transmembrane segment at 342–362 threads the bilayer; that stretch reads LLFMTTALLGWYYVLPFVLFL. Topologically, residues 363–395 are cytoplasmic; that stretch reads QGMVNSTRFSSMNTLTLKDLPDNLASSGNSLLS. A helical membrane pass occupies residues 396–416; that stretch reads MIMQLSMSIGVTIAGLLLGLF. The Periplasmic portion of the chain corresponds to 417 to 430; it reads GSQHVSVDSGTTQT. Residues 431-451 traverse the membrane as a helical segment; it reads VFMYTWLSMAFIIALPAFIFA. The Cytoplasmic segment spans residues 452–471; sequence RVPNDTHQNVAISRRKRSAQ.

The protein belongs to the major facilitator superfamily. TCR/Tet family.

Its subcellular location is the cell inner membrane. The polypeptide is Putative multidrug resistance protein MdtD (Escherichia coli O127:H6 (strain E2348/69 / EPEC)).